A 271-amino-acid chain; its full sequence is Tryptophan synthase alpha chain (271 aa).

Residues Glu49 and Asp60 each act as proton acceptor in the active site.

The protein belongs to the TrpA family. Tetramer of two alpha and two beta chains.

The catalysed reaction is (1S,2R)-1-C-(indol-3-yl)glycerol 3-phosphate + L-serine = D-glyceraldehyde 3-phosphate + L-tryptophan + H2O. Its pathway is amino-acid biosynthesis; L-tryptophan biosynthesis; L-tryptophan from chorismate: step 5/5. Functionally, the alpha subunit is responsible for the aldol cleavage of indoleglycerol phosphate to indole and glyceraldehyde 3-phosphate. The chain is Tryptophan synthase alpha chain from Paraburkholderia phymatum (strain DSM 17167 / CIP 108236 / LMG 21445 / STM815) (Burkholderia phymatum).